Reading from the N-terminus, the 281-residue chain is CDAN1-interacting nuclease 1 (281 aa).

Its subcellular location is the nucleus. It is found in the cytoplasm. Its function is as follows. Plays a role in erythroid cell differentiation. The sequence is that of CDAN1-interacting nuclease 1 (CDIN1) from Bos taurus (Bovine).